A 53-amino-acid chain; its full sequence is UPF0391 membrane protein PC1_0455 (53 aa).

Helical transmembrane passes span 4–24 (WGII…GGLA) and 30–47 (AAKI…LSLF).

The protein belongs to the UPF0391 family.

It localises to the cell membrane. This is UPF0391 membrane protein PC1_0455 from Pectobacterium carotovorum subsp. carotovorum (strain PC1).